The sequence spans 385 residues: S-adenosylmethionine synthase (385 aa).

An ATP-binding site is contributed by His15. Asp17 serves as a coordination point for Mg(2+). Glu43 lines the K(+) pocket. L-methionine-binding residues include Glu56 and Gln99. The segment at 99–109 (QSPDINKGINN) is flexible loop. ATP is bound by residues 164-166 (DAK), 230-231 (RF), Asp239, 245-246 (RK), Ala262, and Lys266. Asp239 is an L-methionine binding site. L-methionine is bound at residue Lys270.

The protein belongs to the AdoMet synthase family. In terms of assembly, homotetramer; dimer of dimers. Mg(2+) is required as a cofactor. The cofactor is K(+).

It is found in the cytoplasm. The catalysed reaction is L-methionine + ATP + H2O = S-adenosyl-L-methionine + phosphate + diphosphate. Its pathway is amino-acid biosynthesis; S-adenosyl-L-methionine biosynthesis; S-adenosyl-L-methionine from L-methionine: step 1/1. Its function is as follows. Catalyzes the formation of S-adenosylmethionine (AdoMet) from methionine and ATP. The overall synthetic reaction is composed of two sequential steps, AdoMet formation and the subsequent tripolyphosphate hydrolysis which occurs prior to release of AdoMet from the enzyme. The chain is S-adenosylmethionine synthase from Baumannia cicadellinicola subsp. Homalodisca coagulata.